The primary structure comprises 200 residues: Polyadenylate-binding protein 1-like 2 (200 aa).

RRM domains follow at residues 2–80 (ASLY…WSQR) and 90–166 (GNVF…RFKS). The disordered stretch occupies residues 170–200 (REAERGAWARQSTSADVKDFEEDTDEEATLR). The segment covering 188 to 200 (DFEEDTDEEATLR) has biased composition (acidic residues).

The protein is Polyadenylate-binding protein 1-like 2 (PABPC1L2A) of Homo sapiens (Human).